Reading from the N-terminus, the 132-residue chain is Glycine-rich protein 3 (132 aa).

The signal sequence occupies residues 1–20; sequence MRYAVLLAVVLLLGAFTAEA.

In terms of tissue distribution, prismatic layer of shell (at protein level). Expressed primarily in the mantle with highest level in the mantle edge and lower level in the mantle pallium.

It is found in the secreted. The sequence is that of Glycine-rich protein 3 from Pinctada maxima (Silver-lipped pearl oyster).